A 252-amino-acid chain; its full sequence is Putative teichuronic acid biosynthesis glycosyltransferase TuaG (252 aa).

It belongs to the glycosyltransferase 2 family.

Its pathway is cell wall biogenesis; teichuronic acid biosynthesis. The chain is Putative teichuronic acid biosynthesis glycosyltransferase TuaG (tuaG) from Bacillus subtilis (strain 168).